The primary structure comprises 130 residues: Small ribosomal subunit protein uS9 (130 aa).

This sequence belongs to the universal ribosomal protein uS9 family.

The sequence is that of Small ribosomal subunit protein uS9 from Xanthomonas campestris pv. campestris (strain 8004).